A 494-amino-acid polypeptide reads, in one-letter code: UDP-N-acetylmuramoyl-L-alanyl-D-glutamate--L-lysine ligase (494 aa).

Ser30 contacts UDP-N-acetyl-alpha-D-muramoyl-L-alanyl-D-glutamate. 110 to 116 (GTNGKTS) serves as a coordination point for ATP. Residues 152-153 (TT), Ser179, and Arg187 contribute to the UDP-N-acetyl-alpha-D-muramoyl-L-alanyl-D-glutamate site. Lys219 bears the N6-carboxylysine mark. The L-lysine recognition motif motif lies at 406–409 (DNPA).

It belongs to the MurCDEF family. MurE subfamily. In terms of processing, carboxylation is probably crucial for Mg(2+) binding and, consequently, for the gamma-phosphate positioning of ATP.

The protein resides in the cytoplasm. The catalysed reaction is UDP-N-acetyl-alpha-D-muramoyl-L-alanyl-D-glutamate + L-lysine + ATP = UDP-N-acetyl-alpha-D-muramoyl-L-alanyl-gamma-D-glutamyl-L-lysine + ADP + phosphate + H(+). The protein operates within cell wall biogenesis; peptidoglycan biosynthesis. Functionally, catalyzes the addition of L-lysine to the nucleotide precursor UDP-N-acetylmuramoyl-L-alanyl-D-glutamate (UMAG) in the biosynthesis of bacterial cell-wall peptidoglycan. In Staphylococcus haemolyticus (strain JCSC1435), this protein is UDP-N-acetylmuramoyl-L-alanyl-D-glutamate--L-lysine ligase.